Here is a 190-residue protein sequence, read N- to C-terminus: Somatotropin (190 aa).

His-19 serves as a coordination point for Zn(2+). An intrachain disulfide couples Cys-52 to Cys-163. Ser-105 carries the phosphoserine modification. Glu-172 contributes to the Zn(2+) binding site. Cysteines 180 and 188 form a disulfide.

It belongs to the somatotropin/prolactin family.

The protein resides in the secreted. Plays an important role in growth control. Its major role in stimulating body growth is to stimulate the liver and other tissues to secrete IGF1. It stimulates both the differentiation and proliferation of myoblasts. It also stimulates amino acid uptake and protein synthesis in muscle and other tissues. The polypeptide is Somatotropin (GH1) (Balaenoptera borealis (Sei whale)).